A 259-amino-acid chain; its full sequence is DNA terminal protein (259 aa).

An O-(5'-phospho-DNA)-tyrosine modification is found at tyrosine 190. Positions 243–259 (KKKYKRRQKRGYGSKGV) match the Nuclear localization signal motif.

It belongs to the tectivirus DNA terminal protein family. In terms of assembly, heterodimer with viral polymerase. Binds to ssDNA.

The protein localises to the virion. It localises to the host nucleus. Its function is as follows. Acts as a primer for viral genomic replication. DNA terminal protein is covalently linked to the 5'-ends of both strands of the genome through a phosphodiester bond between the beta-hydroxyl group of a tyrosine residue and the 5'-phosphate of the terminal deoxyadenylate. This protein is essential for DNA replication and is involved in the priming of DNA elongation. The polypeptide is DNA terminal protein (VIII) (Enterobacteria phage PRD1 (Bacteriophage PRD1)).